Reading from the N-terminus, the 954-residue chain is MLQALQKLLGDPNERKIRKYLPVVKLINSLEIEIASLSDAELRAKTTEFRQRLDRGESLDDLLPEAFAVVREAAKRVLNLRHYDVQLIGGMVLHEGQIAEMKTGEGKTLVATLPAYLNGLTGKGVHIVTVNGYLARRDSEWMGQVHRFLGLTVGLVQEGMSTDEKRRSYHCDITYCTNSELGFDYLRDNMATDIKEVMQRPFNYCIIDEVDSILIDEARTPLIISGQMARPSEKYLKAAQVARELIRDEHYEVDEKARNVILTDEGFEAAERLLGVSDLFDPKDPWAHFVFNAVKAKELFIRDVHYIVRNQEVVIVDEFTGRVLPGRRWSDGLHQAVEAKEGVPIQNESQTLATITYQNLFLLYPKLSGMTGTARTEEAEFSKTYNLEVTVIPTNRPIRRKDAPDLVYKTENAKWKAVAEEIAHMHAQGRPVLVGTTSVEKSERLSAMLKEMGIPHNLLNAKPENVEREAEIIAQAGRKGAVTIATNMAGRGTDIILGGNAEYMARLKLRERLMPKLVQLDPDNPLGSASTTSRGGGQGFGPASPKPKKSWTVVSPNFYPCELSARTSQALDEVVAAAVAKYGLNRLPELVVEDLIAVASEKAPVQDPLILQLREVYNSIKAEYEKVTEAEHEEVVRLGGLHVIGTERHESRRIDNQLRGRAGRQGDPGSSRFFLSLEDNLLKIFGGERVAKLMDMFRVDEDMPIEHPLLSSSLENAQRKVEVYYFDLRKQVFEYDEVMNNQRRAIYSERRRILEGENLKPKILDYMRKTVEEIVRAHVNPELPPEEWEIDKLTAKMQEFVPLLKENLKADDLRDLSYQEILDHLIKQAELAYEAKEAFLDTFEPGLMRKAERFFLLQQVDTLWREHLQQMEALREAVGLRGYGQRDPLIEYKNEGYELFLEMMDNIRRNTVYNLFVFTPQLVQVPQVAQAVPAQAVAASPETGGVVEADFAED.

ATP contacts are provided by residues Q86, G104–T108, and D494. Positions L520–K549 are disordered.

Belongs to the SecA family. As to quaternary structure, monomer and homodimer. Part of the essential Sec protein translocation apparatus which comprises SecA, SecYEG and auxiliary proteins SecDF. Other proteins may also be involved.

It is found in the cell inner membrane. Its subcellular location is the cellular thylakoid membrane. The protein localises to the cytoplasm. It catalyses the reaction ATP + H2O + cellular proteinSide 1 = ADP + phosphate + cellular proteinSide 2.. In terms of biological role, part of the Sec protein translocase complex. Interacts with the SecYEG preprotein conducting channel. Has a central role in coupling the hydrolysis of ATP to the transfer of proteins into and across the cell membrane, serving as an ATP-driven molecular motor driving the stepwise translocation of polypeptide chains across the membrane. Its function is as follows. Probably participates in protein translocation into and across both the cytoplasmic and thylakoid membranes in cyanobacterial cells. This chain is Protein translocase subunit SecA, found in Synechococcus sp. (strain JA-3-3Ab) (Cyanobacteria bacterium Yellowstone A-Prime).